A 240-amino-acid chain; its full sequence is MSSVGPLEDEAAGTELGGSPADPATLTEIDPSAIQVRKTRTVVKLDCERLVSKKGLPYLLKNAPKHARISKRRDTYGNLCHVLQFYQLWAHELYPKAKFKDFVALCDRLGKTDRQLRAYRMQLIREELGLAAEGLDPPPQPLREHTGAGGSQPAGSVAQDTNTNADLSDDDLLYTTSRAAAASSTANPVPRSETPAALAGVDEAELLAQLAEMQRAAEEDVHESEDDEQLALMREMDEFM.

3 disordered regions span residues 1–28 (MSSV…TLTE), 132–169 (AEGL…DLSD), and 213–240 (MQRA…DEFM). The span at 220-229 (DVHESEDDEQ) shows a compositional bias: acidic residues.

The protein belongs to the CSM3 family. As to quaternary structure, component of the fork protection complex (FPC) consisting of TOF1 and CSM3.

The protein localises to the nucleus. Functionally, forms a fork protection complex (FPC) with TOF1 and which is required for chromosome segregation during meiosis and DNA damage repair. FPC coordinates leading and lagging strand synthesis and moves with the replication fork. FPC stabilizes replication forks in a configuration that is recognized by replication checkpoint sensors. In Eremothecium gossypii (strain ATCC 10895 / CBS 109.51 / FGSC 9923 / NRRL Y-1056) (Yeast), this protein is Chromosome segregation in meiosis protein 3 (CSM3).